Consider the following 146-residue polypeptide: D-aminoacyl-tRNA deacylase (146 aa).

The short motif at 137-138 (GP) is the Gly-cisPro motif, important for rejection of L-amino acids element.

This sequence belongs to the DTD family. As to quaternary structure, homodimer.

Its subcellular location is the cytoplasm. The enzyme catalyses glycyl-tRNA(Ala) + H2O = tRNA(Ala) + glycine + H(+). It catalyses the reaction a D-aminoacyl-tRNA + H2O = a tRNA + a D-alpha-amino acid + H(+). In terms of biological role, an aminoacyl-tRNA editing enzyme that deacylates mischarged D-aminoacyl-tRNAs. Also deacylates mischarged glycyl-tRNA(Ala), protecting cells against glycine mischarging by AlaRS. Acts via tRNA-based rather than protein-based catalysis; rejects L-amino acids rather than detecting D-amino acids in the active site. By recycling D-aminoacyl-tRNA to D-amino acids and free tRNA molecules, this enzyme counteracts the toxicity associated with the formation of D-aminoacyl-tRNA entities in vivo and helps enforce protein L-homochirality. This Psychrobacter sp. (strain PRwf-1) protein is D-aminoacyl-tRNA deacylase.